The following is a 275-amino-acid chain: Large ribosomal subunit protein uL2 (275 aa).

The segment at glutamate 236–alanine 263 is disordered.

Belongs to the universal ribosomal protein uL2 family. In terms of assembly, part of the 50S ribosomal subunit. Forms a bridge to the 30S subunit in the 70S ribosome.

Its function is as follows. One of the primary rRNA binding proteins. Required for association of the 30S and 50S subunits to form the 70S ribosome, for tRNA binding and peptide bond formation. It has been suggested to have peptidyltransferase activity; this is somewhat controversial. Makes several contacts with the 16S rRNA in the 70S ribosome. The polypeptide is Large ribosomal subunit protein uL2 (Pseudothermotoga lettingae (strain ATCC BAA-301 / DSM 14385 / NBRC 107922 / TMO) (Thermotoga lettingae)).